The sequence spans 144 residues: 3-hydroxyacyl-[acyl-carrier-protein] dehydratase FabZ (144 aa).

Residue H51 is part of the active site.

It belongs to the thioester dehydratase family. FabZ subfamily.

The protein localises to the cytoplasm. The catalysed reaction is a (3R)-hydroxyacyl-[ACP] = a (2E)-enoyl-[ACP] + H2O. In terms of biological role, involved in unsaturated fatty acids biosynthesis. Catalyzes the dehydration of short chain beta-hydroxyacyl-ACPs and long chain saturated and unsaturated beta-hydroxyacyl-ACPs. The chain is 3-hydroxyacyl-[acyl-carrier-protein] dehydratase FabZ from Clostridium botulinum (strain Okra / Type B1).